The sequence spans 278 residues: Phage-like element PBSX protein XkdB (278 aa).

Positions 58-80 (LKAREMAAVFGVSEKTVRRWLEL) form a DNA-binding region, H-T-H motif. Disordered regions lie at residues 117–136 (SLKERPFSPQTPDTNDRTDI) and 239–278 (QHERMKKHDKTNNRTDFGRAEKRETSITGGQTGRIRRKQV). Over residues 248–263 (KTNNRTDFGRAEKRET) the composition is skewed to basic and acidic residues.

It to B.subtilis YqaL.

The sequence is that of Phage-like element PBSX protein XkdB (xkdB) from Bacillus subtilis (strain 168).